Consider the following 156-residue polypeptide: MGMRRGRRLAVDVGDARIGVASCDPDGILATPVETVPGRDVPAAHRRLKQLVEEYEPIEVVLGLPRSLKGGEGPAAVKVRAFAQELARVIAPVPVRLMDERMTTVTASQGLRASGVKSKKGRSVIDQAAAVIILQQALESERVSGKAPGEGVEVVI.

It belongs to the YqgF nuclease family.

Its subcellular location is the cytoplasm. Its function is as follows. Could be a nuclease involved in processing of the 5'-end of pre-16S rRNA. This Streptomyces avermitilis (strain ATCC 31267 / DSM 46492 / JCM 5070 / NBRC 14893 / NCIMB 12804 / NRRL 8165 / MA-4680) protein is Putative pre-16S rRNA nuclease.